A 280-amino-acid polypeptide reads, in one-letter code: Large ribosomal subunit protein uL2 (280 aa).

Disordered regions lie at residues 27–58 (STPE…GGGH) and 226–280 (MNPV…KHGR). Composition is skewed to basic residues over residues 37–58 (LHGH…GGGH) and 268–280 (IVRR…KHGR).

The protein belongs to the universal ribosomal protein uL2 family. As to quaternary structure, part of the 50S ribosomal subunit. Forms a bridge to the 30S subunit in the 70S ribosome.

In terms of biological role, one of the primary rRNA binding proteins. Required for association of the 30S and 50S subunits to form the 70S ribosome, for tRNA binding and peptide bond formation. It has been suggested to have peptidyltransferase activity; this is somewhat controversial. Makes several contacts with the 16S rRNA in the 70S ribosome. This chain is Large ribosomal subunit protein uL2, found in Mycobacterium marinum (strain ATCC BAA-535 / M).